The chain runs to 236 residues: Phosphoribosylaminoimidazole-succinocarboxamide synthase (236 aa).

This sequence belongs to the SAICAR synthetase family.

The enzyme catalyses 5-amino-1-(5-phospho-D-ribosyl)imidazole-4-carboxylate + L-aspartate + ATP = (2S)-2-[5-amino-1-(5-phospho-beta-D-ribosyl)imidazole-4-carboxamido]succinate + ADP + phosphate + 2 H(+). The protein operates within purine metabolism; IMP biosynthesis via de novo pathway; 5-amino-1-(5-phospho-D-ribosyl)imidazole-4-carboxamide from 5-amino-1-(5-phospho-D-ribosyl)imidazole-4-carboxylate: step 1/2. The sequence is that of Phosphoribosylaminoimidazole-succinocarboxamide synthase from Pseudomonas savastanoi pv. phaseolicola (strain 1448A / Race 6) (Pseudomonas syringae pv. phaseolicola (strain 1448A / Race 6)).